We begin with the raw amino-acid sequence, 221 residues long: Succinate--CoA ligase [ADP-forming] subunit beta, mitochondrial (221 aa).

The ATP-grasp domain maps to 1-122 (DVVIKAQVLA…DSNSAYRQKI (122 aa)). Lysine 5 is an ATP binding site. Residues lysine 22 and lysine 26 each carry the N6-acetyllysine modification. Serine 114 carries the post-translational modification Phosphoserine. At threonine 139 the chain carries Phosphothreonine. 171–173 (GIM) is a substrate binding site. At lysine 196 the chain carries N6-acetyllysine.

The protein belongs to the succinate/malate CoA ligase beta subunit family. ATP-specific subunit beta subfamily. Heterodimer of an alpha and a beta subunit. The beta subunit determines specificity for ATP. Interacts with ALAS2.

Its subcellular location is the mitochondrion. The enzyme catalyses succinate + ATP + CoA = succinyl-CoA + ADP + phosphate. It functions in the pathway carbohydrate metabolism; tricarboxylic acid cycle; succinate from succinyl-CoA (ligase route): step 1/1. In terms of biological role, ATP-specific succinyl-CoA synthetase functions in the citric acid cycle (TCA), coupling the hydrolysis of succinyl-CoA to the synthesis of ATP and thus represents the only step of substrate-level phosphorylation in the TCA. The beta subunit provides nucleotide specificity of the enzyme and binds the substrate succinate, while the binding sites for coenzyme A and phosphate are found in the alpha subunit. This chain is Succinate--CoA ligase [ADP-forming] subunit beta, mitochondrial, found in Mesocricetus auratus (Golden hamster).